The primary structure comprises 521 residues: uncharacterized protein (521 aa).

The disordered stretch occupies residues 1 to 25 (MLQRSLGVNGRKLAMSARSAKRERK). A run of 6 helical transmembrane segments spans residues 68-88 (GAVWVLPTFGVAIGLGSGAVL), 114-134 (VLIVVSATMITTIGIVFSLTV), 160-180 (VVLAIFACTFAYSTGGLHTVG), 192-212 (VAVTGSLALAFVSIAALIYFL), 290-310 (ALLVTFVGDYVTAGGLLGWCW), and 399-419 (LLFWLPYPSFATYLHVGCAQI).

It is found in the cell membrane. This is an uncharacterized protein from Mycobacterium tuberculosis (strain CDC 1551 / Oshkosh).